The primary structure comprises 421 residues: 4-hydroxy-3-methylbut-2-en-1-yl diphosphate synthase (flavodoxin) (421 aa).

4 residues coordinate [4Fe-4S] cluster: C311, C314, C357, and E364.

The protein belongs to the IspG family. Requires [4Fe-4S] cluster as cofactor.

It catalyses the reaction (2E)-4-hydroxy-3-methylbut-2-enyl diphosphate + oxidized [flavodoxin] + H2O + 2 H(+) = 2-C-methyl-D-erythritol 2,4-cyclic diphosphate + reduced [flavodoxin]. It participates in isoprenoid biosynthesis; isopentenyl diphosphate biosynthesis via DXP pathway; isopentenyl diphosphate from 1-deoxy-D-xylulose 5-phosphate: step 5/6. Converts 2C-methyl-D-erythritol 2,4-cyclodiphosphate (ME-2,4cPP) into 1-hydroxy-2-methyl-2-(E)-butenyl 4-diphosphate. This Xanthomonas axonopodis pv. citri (strain 306) protein is 4-hydroxy-3-methylbut-2-en-1-yl diphosphate synthase (flavodoxin).